A 69-amino-acid polypeptide reads, in one-letter code: Conotoxin Fr3.1 (69 aa).

The signal sequence occupies residues M1–L20. Positions Q21–R51 are excised as a propeptide. The residue at position 52 (Q52) is a Pyrrolidone carboxylic acid. E54 bears the 4-carboxyglutamate mark. A 4-hydroxyproline modification is found at P58.

This sequence belongs to the conotoxin M superfamily. In terms of tissue distribution, expressed by the venom duct.

It is found in the secreted. Its function is as follows. Probable toxin. The protein is Conotoxin Fr3.1 of Conus frigidus (Frigid cone).